A 306-amino-acid polypeptide reads, in one-letter code: Bifunctional protein FolD 2 (306 aa).

NADP(+) contacts are provided by residues 169 to 171 and Ile235; that span reads GHS.

It belongs to the tetrahydrofolate dehydrogenase/cyclohydrolase family. In terms of assembly, homodimer.

The catalysed reaction is (6R)-5,10-methylene-5,6,7,8-tetrahydrofolate + NADP(+) = (6R)-5,10-methenyltetrahydrofolate + NADPH. It carries out the reaction (6R)-5,10-methenyltetrahydrofolate + H2O = (6R)-10-formyltetrahydrofolate + H(+). The protein operates within one-carbon metabolism; tetrahydrofolate interconversion. Functionally, catalyzes the oxidation of 5,10-methylenetetrahydrofolate to 5,10-methenyltetrahydrofolate and then the hydrolysis of 5,10-methenyltetrahydrofolate to 10-formyltetrahydrofolate. In Mesorhizobium japonicum (strain LMG 29417 / CECT 9101 / MAFF 303099) (Mesorhizobium loti (strain MAFF 303099)), this protein is Bifunctional protein FolD 2.